The primary structure comprises 233 residues: Glutathione S-transferase U15 (233 aa).

One can recognise a GST N-terminal domain in the interval 5–85 (EEVKLLGTWY…YIDETWNSSG (81 aa)). Glutathione contacts are provided by residues 15 to 16 (SP), 42 to 43 (SK), 56 to 57 (KV), and 69 to 70 (VS). The GST C-terminal domain occupies 92–219 (HPYDRALARF…VPDIDKVAKF (128 aa)). Residue Thr158 is modified to Phosphothreonine.

This sequence belongs to the GST superfamily. Tau family.

The protein resides in the cytoplasm. It localises to the cytosol. It catalyses the reaction RX + glutathione = an S-substituted glutathione + a halide anion + H(+). Functionally, may be involved in the conjugation of reduced glutathione to a wide number of exogenous and endogenous hydrophobic electrophiles and have a detoxification role against certain herbicides. In Arabidopsis thaliana (Mouse-ear cress), this protein is Glutathione S-transferase U15 (GSTU15).